The following is a 635-amino-acid chain: Threonine--tRNA ligase (635 aa).

A TGS domain is found at 1 to 61; the sequence is MIKITLKDGK…HKDSSLEILT (61 aa). The tract at residues 242–532 is catalytic; sequence DHRKLGKELD…LIEQYAGAFP (291 aa). 3 residues coordinate Zn(2+): cysteine 333, histidine 384, and histidine 509.

The protein belongs to the class-II aminoacyl-tRNA synthetase family. Homodimer. It depends on Zn(2+) as a cofactor.

It localises to the cytoplasm. It carries out the reaction tRNA(Thr) + L-threonine + ATP = L-threonyl-tRNA(Thr) + AMP + diphosphate + H(+). Functionally, catalyzes the attachment of threonine to tRNA(Thr) in a two-step reaction: L-threonine is first activated by ATP to form Thr-AMP and then transferred to the acceptor end of tRNA(Thr). Also edits incorrectly charged L-seryl-tRNA(Thr). The polypeptide is Threonine--tRNA ligase (Clostridium botulinum (strain Kyoto / Type A2)).